The primary structure comprises 635 residues: Sodium- and chloride-dependent creatine transporter 1 (635 aa).

The segment covering 1–11 has biased composition (polar residues); sequence MANKSTENGIY. The segment at 1–27 is disordered; the sequence is MANKSTENGIYSVSGEEKKGPLIAPGP. Over 1 to 60 the chain is Cytoplasmic; it reads MANKSTENGIYSVSGEEKKGPLIAPGPDGAPAKGDGPAALGAPGSLLAVPPRETWTRQMD. Residues 61 to 81 traverse the membrane as a helical segment; the sequence is FIMSCVGFAVGLGNVWRFPYL. Residues 82–87 are Extracellular-facing; sequence CYKNGG. Residues 88–108 traverse the membrane as a helical segment; it reads GVFLIPYILIALIGGIPIFFL. The Cytoplasmic portion of the chain corresponds to 109 to 138; the sequence is EISLGQFMKAGSINVWNICPLFKGLGYASM. A helical membrane pass occupies residues 139-159; that stretch reads VIVFYCNTYYIMVLAWGFYYL. At 160–230 the chain is on the extracellular side; the sequence is VKSFTTTLPW…LSEGLEVPGA (71 aa). Asn-192 and Asn-197 each carry an N-linked (GlcNAc...) asparagine glycan. A helical membrane pass occupies residues 231–251; sequence LNWEVTLCLLTCWVLVYFCVW. At 252 to 269 the chain is on the cytoplasmic side; sequence KGVKSTGKIVYFTATFPY. Residues 270-290 traverse the membrane as a helical segment; that stretch reads VVLVVLLVRGVLLPGALDGII. The Extracellular portion of the chain corresponds to 291–304; that stretch reads YYLKPDWSKLASPQ. The helical transmembrane segment at 305–325 threads the bilayer; sequence VWIDAGTQIFFSYAIGLGALT. Over 326 to 341 the chain is Cytoplasmic; sequence ALGSYNRFNNNCYKDA. Residues 342–362 traverse the membrane as a helical segment; sequence IILALINSGTSFFAGFVVFSI. The Extracellular portion of the chain corresponds to 363–394; the sequence is LGFMATEQGVHISKVAESGPGLAFIAYPRAVT. The helical transmembrane segment at 395 to 415 threads the bilayer; sequence LMPVAPLWAALFFFMLLLLGL. At 416–444 the chain is on the cytoplasmic side; sequence DSQFVGVEGFITGLLDLLPASYYFRFQRE. The chain crosses the membrane as a helical span at residues 445–465; sequence ISVALCCTICFVIDLSMVTDG. The Extracellular segment spans residues 466–479; that stretch reads GMYVFQLFDYYSAS. The chain crosses the membrane as a helical span at residues 480–500; it reads GTTLLWQAFWECVVVAWVYGA. The Cytoplasmic segment spans residues 501-520; that stretch reads DRFMDDVACMIGYRPCPWMK. Residues 521-541 form a helical membrane-spanning segment; the sequence is WCWSFFTPLVCMGIFIFNVVY. At 542-560 the chain is on the extracellular side; the sequence is HEPLVYNNTYVYPWWGEAV. N-linked (GlcNAc...) asparagine glycosylation is present at Asn-548. The chain crosses the membrane as a helical span at residues 561 to 581; the sequence is GWAFALSSMLCVPLHLLGCLL. Residues 582–635 lie on the Cytoplasmic side of the membrane; it reads RAKGTMAERWQHLTQPIWGLHHLEYRAQDSDVRGLTTLTPVSESSKVVVVESVM. A phosphothreonine mark is found at Thr-617 and Thr-620. A Phosphoserine modification is found at Ser-623.

It belongs to the sodium:neurotransmitter symporter (SNF) (TC 2.A.22) family. SLC6A8 subfamily. Glycosylated.

Its subcellular location is the cell membrane. The protein resides in the apical cell membrane. It carries out the reaction creatine(out) + chloride(out) + 2 Na(+)(out) = creatine(in) + chloride(in) + 2 Na(+)(in). In terms of biological role, creatine:sodium symporter which mediates the uptake of creatine. Plays an important role in supplying creatine to the brain via the blood-brain barrier. The polypeptide is Sodium- and chloride-dependent creatine transporter 1 (SLC6A8) (Bos taurus (Bovine)).